Here is a 316-residue protein sequence, read N- to C-terminus: Annexin A13 (316 aa).

G2 carries the N-myristoyl glycine lipid modification. Annexin repeat units follow at residues 14-85 (FDVD…ALLD), 86-157 (RPSE…SLLQ), 169-241 (DLAG…TLVR), and 245-316 (DQEG…ALLH).

The protein belongs to the annexin family. In terms of assembly, monomer and homodimer. Detected in intestine, and at much lower levels also in kidney (at protein level).

Its subcellular location is the apical cell membrane. The protein resides in the cell membrane. It is found in the cytoplasmic vesicle. Functionally, binds to membranes enriched in phosphatidylserine or phosphatidylglycerol in a calcium-dependent manner. Half-maximal membrane binding requires about 60 uM calcium. Does not bind to membranes that lack phospholipids with an acidic headgroup. Its function is as follows. Binds to membranes enriched in phosphatidylserine or phosphatidylglycerol in a calcium-dependent manner, but requires higher calcium levels for membrane binding than isoform A. Half-maximal membrane binding requires about 320 uM calcium. May play a role in vesicular traffic to the apical plasma membrane. This Canis lupus familiaris (Dog) protein is Annexin A13 (ANXA13).